Reading from the N-terminus, the 127-residue chain is Small ribosomal subunit protein uS13 (127 aa).

Residues 90-127 are disordered; it reads RRHRQGLPVRGQRTRTNARTRRGRRLTVAGKKKTPAKK. Residues 101 to 127 show a composition bias toward basic residues; the sequence is QRTRTNARTRRGRRLTVAGKKKTPAKK.

This sequence belongs to the universal ribosomal protein uS13 family. Part of the 30S ribosomal subunit. Forms a loose heterodimer with protein S19. Forms two bridges to the 50S subunit in the 70S ribosome.

Its function is as follows. Located at the top of the head of the 30S subunit, it contacts several helices of the 16S rRNA. In the 70S ribosome it contacts the 23S rRNA (bridge B1a) and protein L5 of the 50S subunit (bridge B1b), connecting the 2 subunits; these bridges are implicated in subunit movement. Contacts the tRNAs in the A and P-sites. In Synechocystis sp. (strain ATCC 27184 / PCC 6803 / Kazusa), this protein is Small ribosomal subunit protein uS13.